The sequence spans 148 residues: MVQTVLNSVWLWRSVLLRLTFSDSGSFLGQSFLLFSSGFWSVLVEQLEGFSSGVSVQSVLELSNGWRNLQSDGQDLLLSLQSDIFWPFDVSGQVSLWLDSLANTEVLWSRVSQWVLSLVRLSGLSTEWSWSNFLTWSHLFFQLSCSLY.

An N-terminal signal peptide occupies residues 1–22; that stretch reads MVQTVLNSVWLWRSVLLRLTFS.

This is an uncharacterized protein from Saccharomyces cerevisiae (strain ATCC 204508 / S288c) (Baker's yeast).